We begin with the raw amino-acid sequence, 760 residues long: Dipeptidyl peptidase 4 (760 aa).

Over 1–6 (MKTPWK) the chain is Cytoplasmic. A helical; Signal-anchor for type II membrane protein membrane pass occupies residues 7 to 28 (VLLGLLGVAALVTIITVPIVLL). Over 29–760 (SKDEAAADSR…HFLQQCFSLH (732 aa)) the chain is Extracellular. N-linked (GlcNAc...) asparagine glycosylation is found at N83, N90, N144, N213, N223, N315, and N328. 4 disulfide bridges follow: C322/C333, C379/C388, C438/C441, and C448/C466. N514 carries N-linked (GlcNAc...) asparagine glycosylation. The Charge relay system role is filled by S624. A disulfide bridge connects residues C643 and C756. Residue N679 is glycosylated (N-linked (GlcNAc...) asparagine). Residues D702 and H734 each act as charge relay system in the active site.

Belongs to the peptidase S9B family. DPPIV subfamily. Monomer. Homodimer. Heterodimer with Seprase (FAP). Requires homodimerization for optimal dipeptidyl peptidase activity and T-cell costimulation. Found in a membrane raft complex, at least composed of BCL10, CARD11, DPP4 and IKBKB. Associates with collagen. Interacts with PTPRC; the interaction is enhanced in an interleukin-12-dependent manner in activated lymphocytes. Interacts (via extracellular domain) with ADA; does not inhibit its dipeptidyl peptidase activity. Interacts with CAV1 (via the N-terminus); the interaction is direct. Interacts (via cytoplasmic tail) with CARD11 (via PDZ domain); its homodimerization is necessary for interaction with CARD11. Interacts with IGF2R; the interaction is direct. Interacts with GPC3. Post-translationally, the soluble form (Dipeptidyl peptidase 4 soluble form also named SDPP) derives from the membrane form (Dipeptidyl peptidase 4 membrane form also named MDPP) by proteolytic processing. N- and O-Glycosylated. In terms of processing, phosphorylated. Mannose 6-phosphate residues in the carbohydrate moiety are necessary for interaction with IGF2R in activated T-cells. Mannose 6-phosphorylation is induced during T-cell activation.

It localises to the secreted. The protein localises to the cell membrane. Its subcellular location is the apical cell membrane. The protein resides in the cell projection. It is found in the invadopodium membrane. It localises to the lamellipodium membrane. The protein localises to the cell junction. Its subcellular location is the membrane raft. The catalysed reaction is Release of an N-terminal dipeptide, Xaa-Yaa-|-Zaa-, from a polypeptide, preferentially when Yaa is Pro, provided Zaa is neither Pro nor hydroxyproline.. Its activity is regulated as follows. Inhibited by GPC3 and diprotin A. Cell surface glycoprotein receptor involved in the costimulatory signal essential for T-cell receptor (TCR)-mediated T-cell activation. Acts as a positive regulator of T-cell coactivation, by binding at least ADA, CAV1, IGF2R, and PTPRC. Its binding to CAV1 and CARD11 induces T-cell proliferation and NF-kappa-B activation in a T-cell receptor/CD3-dependent manner. Its interaction with ADA also regulates lymphocyte-epithelial cell adhesion. In association with FAP is involved in the pericellular proteolysis of the extracellular matrix (ECM), the migration and invasion of endothelial cells into the ECM. May be involved in the promotion of lymphatic endothelial cells adhesion, migration and tube formation. When overexpressed, enhanced cell proliferation, a process inhibited by GPC3. Also acts as a serine exopeptidase with a dipeptidyl peptidase activity that regulates various physiological processes by cleaving peptides in the circulation, including many chemokines, mitogenic growth factors, neuropeptides and peptide hormones. Removes N-terminal dipeptides sequentially from polypeptides having unsubstituted N-termini provided that the penultimate residue is proline. This Mus musculus (Mouse) protein is Dipeptidyl peptidase 4 (Dpp4).